The following is a 569-amino-acid chain: Protein GPR108 (569 aa).

Residues 1-34 (MAVSERRGLSGESPTQCRWGYLSLLVLTLSGCSG) form the signal peptide. Residues N59, N111, and N182 are each glycosylated (N-linked (GlcNAc...) asparagine). Residues 144–219 (LLPEAPTQSG…DPSGKEKDQV (76 aa)) form a disordered region. A compositionally biased stretch (polar residues) spans 180–192 (KENQTAPQVSGDK). Basic and acidic residues predominate over residues 194 to 203 (TPGEHRHSSE). N226 and N230 each carry an N-linked (GlcNAc...) asparagine glycan. 7 helical membrane passes run 289-309 (LYLI…SVLC), 318-338 (IHWL…FHSI), 362-382 (LLKG…WAFV), 393-413 (IFGI…VIES), 427-447 (ILFL…VWSI), 475-495 (VMVI…QVAV), and 499-519 (WQWL…VLTG).

Belongs to the LU7TM family. In terms of tissue distribution, high expression in spleen, lung, stomach, large and small intestine, and thymus.

It is found in the golgi apparatus. Its subcellular location is the cis-Golgi network membrane. The protein localises to the trans-Golgi network membrane. The protein resides in the golgi apparatus membrane. Functionally, may play a role in intracellular immune modulation by activating NF-kappaB response and attenuating Toll-like-receptor response. In terms of biological role, (Microbial infection) Plays an essential function in adeno-associated virus (AAV) transduction, across multiple serotypes except AAV5. May play a critical role in mediating the endosomal virus escape or in the AAV virions trafficking from endosomes to the nucleus. This is Protein GPR108 (Gpr108) from Mus musculus (Mouse).